We begin with the raw amino-acid sequence, 637 residues long: Nucleoside triphosphatase I (637 aa).

The Helicase ATP-binding domain occupies 43–205 (FLGLNSMNSI…QMLVNLLRPG (163 aa)). 56-63 (QETGVGKT) lines the ATP pocket. The short motif at 142–145 (DECH) is the DEXH box element. One can recognise a Helicase C-terminal domain in the interval 358–537 (ELYNYLYEHS…QLYKVFKHSS (180 aa)). Residues 459–526 (DIFILDMTWN…DIIQSKSKEF (68 aa)) form a binding to the cap-specific mRNA (nucleoside-2'-O-)-methyltransferase region.

The protein belongs to the helicase family. NPH I subfamily. Monomer. Interacts (via C-terminus) with RAP94 (via N-terminus). Interacts with the cap-specific mRNA (nucleoside-2'-O-)-methyltransferase.

It is found in the virion. The catalysed reaction is a ribonucleoside 5'-triphosphate + H2O = a ribonucleoside 5'-diphosphate + phosphate + H(+). Its function is as follows. DNA-dependent ATPase required for providing the needed energy to achieve the termination of early transcripts. Acts in concert with the RAP94 subunit of the virion RNA polymerase and the capping enzyme/VTF to catalyze release of UUUUUNU-containing nascent RNA from the elongation complex. NPH-I must bind ssDNA in order to exhibit ATPase activity. The protein is Nucleoside triphosphatase I (NPH1) of Vertebrata (FPV).